Here is a 144-residue protein sequence, read N- to C-terminus: Large ribosomal subunit protein uL16 (144 aa).

The protein belongs to the universal ribosomal protein uL16 family. As to quaternary structure, part of the 50S ribosomal subunit.

In terms of biological role, binds 23S rRNA and is also seen to make contacts with the A and possibly P site tRNAs. In Lactiplantibacillus plantarum (strain ATCC BAA-793 / NCIMB 8826 / WCFS1) (Lactobacillus plantarum), this protein is Large ribosomal subunit protein uL16.